We begin with the raw amino-acid sequence, 164 residues long: Ribonuclease P protein component 2 (164 aa).

This sequence belongs to the eukaryotic/archaeal RNase P protein component 2 family. As to quaternary structure, consists of a catalytic RNA component and at least 4-5 protein subunits.

The protein resides in the cytoplasm. It carries out the reaction Endonucleolytic cleavage of RNA, removing 5'-extranucleotides from tRNA precursor.. Functionally, part of ribonuclease P, a protein complex that generates mature tRNA molecules by cleaving their 5'-ends. The chain is Ribonuclease P protein component 2 from Halobacterium salinarum (strain ATCC 29341 / DSM 671 / R1).